The sequence spans 215 residues: Large ribosomal subunit protein uL16 (215 aa).

The protein belongs to the universal ribosomal protein uL16 family. Component of the large ribosomal subunit.

The protein localises to the cytoplasm. Its function is as follows. Component of the large ribosomal subunit. Plays a role in the formation of actively translating ribosomes. Plays a role in the embryonic brain development. The protein is Large ribosomal subunit protein uL16 of Danio rerio (Zebrafish).